A 311-amino-acid chain; its full sequence is Ribonuclease Z (311 aa).

Zn(2+) contacts are provided by H61, H63, D65, H66, H139, D210, and H268. The Proton acceptor role is filled by D65.

This sequence belongs to the RNase Z family. In terms of assembly, homodimer. Zn(2+) serves as cofactor.

It carries out the reaction Endonucleolytic cleavage of RNA, removing extra 3' nucleotides from tRNA precursor, generating 3' termini of tRNAs. A 3'-hydroxy group is left at the tRNA terminus and a 5'-phosphoryl group is left at the trailer molecule.. Zinc phosphodiesterase, which displays some tRNA 3'-processing endonuclease activity. Probably involved in tRNA maturation, by removing a 3'-trailer from precursor tRNA. In Haloarcula marismortui (strain ATCC 43049 / DSM 3752 / JCM 8966 / VKM B-1809) (Halobacterium marismortui), this protein is Ribonuclease Z.